The chain runs to 445 residues: Phosphoglucosamine mutase (445 aa).

Ser101 acts as the Phosphoserine intermediate in catalysis. 4 residues coordinate Mg(2+): Ser101, Asp240, Asp242, and Asp244. Ser101 carries the post-translational modification Phosphoserine.

Belongs to the phosphohexose mutase family. Mg(2+) is required as a cofactor. Activated by phosphorylation.

It catalyses the reaction alpha-D-glucosamine 1-phosphate = D-glucosamine 6-phosphate. Catalyzes the conversion of glucosamine-6-phosphate to glucosamine-1-phosphate. The sequence is that of Phosphoglucosamine mutase from Pseudomonas fluorescens (strain SBW25).